The chain runs to 265 residues: Non-seed lectin (265 aa).

A signal peptide (or 23) is located at residues 1–21; that stretch reads MALYRTKELVSLVSIMFVLLA. Residues Asn59 and Asn127 are each glycosylated (N-linked (GlcNAc...) asparagine).

This sequence belongs to the leguminous lectin family. Monomer. Most highly expressed in the epidermal layer of developing shoot tips.

This is Non-seed lectin from Pisum sativum (Garden pea).